We begin with the raw amino-acid sequence, 447 residues long: N-succinylarginine dihydrolase (447 aa).

Substrate is bound by residues 19–28, asparagine 110, and 137–138; these read AGLSFGNEAS and HR. Residue glutamate 174 is part of the active site. Arginine 214 provides a ligand contact to substrate. Histidine 250 is an active-site residue. Aspartate 252 and asparagine 365 together coordinate substrate. The active-site Nucleophile is cysteine 371.

It belongs to the succinylarginine dihydrolase family. As to quaternary structure, homodimer.

The catalysed reaction is N(2)-succinyl-L-arginine + 2 H2O + 2 H(+) = N(2)-succinyl-L-ornithine + 2 NH4(+) + CO2. The protein operates within amino-acid degradation; L-arginine degradation via AST pathway; L-glutamate and succinate from L-arginine: step 2/5. In terms of biological role, catalyzes the hydrolysis of N(2)-succinylarginine into N(2)-succinylornithine, ammonia and CO(2). This is N-succinylarginine dihydrolase from Acinetobacter baumannii (strain ACICU).